The sequence spans 43 residues: Cytin chain A (43 aa).

This sequence belongs to the protease inhibitor I13 (potato type I serine protease inhibitor) family. Heterodimer of an A chain and a B chain, linked by a disulfide bond.

Its function is as follows. Inhibitor of chymotrypsin. This Theromyzon tessulatum (Duck leech) protein is Cytin chain A.